The sequence spans 95 residues: UPF0235 protein Adeh_1087 (95 aa).

This sequence belongs to the UPF0235 family.

This Anaeromyxobacter dehalogenans (strain 2CP-C) protein is UPF0235 protein Adeh_1087.